The chain runs to 95 residues: NELL2-interacting cell ontogeny regulator 1 (95 aa).

Positions 1–34 are cleaved as a signal peptide; it reads MAPPPACRSPMSPPPPPLLLLLLSLALLGARARA.

The protein belongs to the NICOL family. As to quaternary structure, interacts with NELL2; triggers epididymal differentiation. Interacts with cell surface receptor TFRC; the interaction mediates uptake of NICOL1 into fibroblasts. Detected in the brain (at protein level). Also expressed at low levels in the kidney, primarily in tubular epithelial cells.

The protein localises to the secreted. It localises to the cytoplasm. Its subcellular location is the perinuclear region. Its function is as follows. mRNA-binding protein which interacts with a range of target mRNAs including SERPINE1, ACTA2, CCN2 and COL4A1 and may promote extracellular matrix production. Binds to the 3'-UTR of SERPINE1 mRNA and stabilizes the mRNA, possibly by competing for binding with SERBP1 and preventing SERBP1-mediated mRNA degradation. Also binds to the 3'-UTR of ACTA2. Testis-derived lumicrine factor that triggers epididymal differentiation and sperm maturation. The chain is NELL2-interacting cell ontogeny regulator 1 from Homo sapiens (Human).